Consider the following 101-residue polypeptide: 2-amino-4-ketopentanoate thiolase alpha subunit (101 aa).

Belongs to the OrtA family. In terms of assembly, heterodimer with OrtB.

The enzyme catalyses D-alanine + acetyl-CoA = (2R)-2-amino-4-oxopentanoate + CoA. In terms of biological role, involved in the ornithine fermentation pathway. Catalyzes the thiolytic cleavage of 2-amino-4-ketopentanoate (AKP) with coenzyme A (CoA) to form acetyl-CoA and alanine. It is strictly specific for AKP. The protein is 2-amino-4-ketopentanoate thiolase alpha subunit of Unknown prokaryotic organism.